The primary structure comprises 139 residues: Nucleoside diphosphate kinase (139 aa).

ATP-binding residues include K10, F58, R86, T92, R104, and N114. H117 acts as the Pros-phosphohistidine intermediate in catalysis.

This sequence belongs to the NDK family. In terms of assembly, homotetramer. Mg(2+) serves as cofactor.

The protein resides in the cytoplasm. It catalyses the reaction a 2'-deoxyribonucleoside 5'-diphosphate + ATP = a 2'-deoxyribonucleoside 5'-triphosphate + ADP. It carries out the reaction a ribonucleoside 5'-diphosphate + ATP = a ribonucleoside 5'-triphosphate + ADP. In terms of biological role, major role in the synthesis of nucleoside triphosphates other than ATP. The ATP gamma phosphate is transferred to the NDP beta phosphate via a ping-pong mechanism, using a phosphorylated active-site intermediate. This is Nucleoside diphosphate kinase from Mycolicibacterium smegmatis (strain ATCC 700084 / mc(2)155) (Mycobacterium smegmatis).